The primary structure comprises 203 residues: Ribonuclease HII (203 aa).

Residues 15 to 201 enclose the RNase H type-2 domain; sequence LLVAGLDEAG…VAQAPLRFPE (187 aa). Aspartate 21, glutamate 22, and aspartate 111 together coordinate a divalent metal cation.

Belongs to the RNase HII family. Requires Mn(2+) as cofactor. Mg(2+) serves as cofactor.

It is found in the cytoplasm. The catalysed reaction is Endonucleolytic cleavage to 5'-phosphomonoester.. Functionally, endonuclease that specifically degrades the RNA of RNA-DNA hybrids. This Thermus thermophilus (strain ATCC 27634 / DSM 579 / HB8) protein is Ribonuclease HII.